We begin with the raw amino-acid sequence, 379 residues long: tRNA-specific 2-thiouridylase MnmA (379 aa).

ATP is bound by residues 23 to 30 (AMSGGVDS) and leucine 49. Residue cysteine 117 is the Nucleophile of the active site. An intrachain disulfide couples cysteine 117 to cysteine 214. Glycine 141 is an ATP binding site. An interaction with tRNA region spans residues 163-165 (RDQ). The active-site Cysteine persulfide intermediate is cysteine 214.

Belongs to the MnmA/TRMU family.

The protein resides in the cytoplasm. The enzyme catalyses S-sulfanyl-L-cysteinyl-[protein] + uridine(34) in tRNA + AH2 + ATP = 2-thiouridine(34) in tRNA + L-cysteinyl-[protein] + A + AMP + diphosphate + H(+). Functionally, catalyzes the 2-thiolation of uridine at the wobble position (U34) of tRNA, leading to the formation of s(2)U34. The sequence is that of tRNA-specific 2-thiouridylase MnmA from Cereibacter sphaeroides (strain ATCC 17029 / ATH 2.4.9) (Rhodobacter sphaeroides).